A 344-amino-acid polypeptide reads, in one-letter code: Anthranilate phosphoribosyltransferase (344 aa).

Residues glycine 83, 86 to 87 (GD), threonine 91, 93 to 96 (NIST), 111 to 119 (KHGGRSVSS), and serine 123 contribute to the 5-phospho-alpha-D-ribose 1-diphosphate site. Glycine 83 provides a ligand contact to anthranilate. Serine 95 is a Mg(2+) binding site. Arginine 169 is a binding site for anthranilate. Mg(2+) is bound by residues aspartate 228 and glutamate 229.

The protein belongs to the anthranilate phosphoribosyltransferase family. As to quaternary structure, homodimer. It depends on Mg(2+) as a cofactor.

The enzyme catalyses N-(5-phospho-beta-D-ribosyl)anthranilate + diphosphate = 5-phospho-alpha-D-ribose 1-diphosphate + anthranilate. It participates in amino-acid biosynthesis; L-tryptophan biosynthesis; L-tryptophan from chorismate: step 2/5. Functionally, catalyzes the transfer of the phosphoribosyl group of 5-phosphorylribose-1-pyrophosphate (PRPP) to anthranilate to yield N-(5'-phosphoribosyl)-anthranilate (PRA). The protein is Anthranilate phosphoribosyltransferase of Methylibium petroleiphilum (strain ATCC BAA-1232 / LMG 22953 / PM1).